The chain runs to 357 residues: MLKLVIIENMAEIMLFSLDLLLFSTDILCFNFPSKMIKLPGFITIQIFFYPQASFGISANTILLLFHIFTFVFSHRSKSIDMIISHLSLIHILLLFTQAILVSLDFFGSQNTQDDLRYKVIVFLNKVMRGLSICTPCLLSVLQAIISPSIFSLAKLKHPSASHILGFFLFSWVLNMFIGVIFCCTLRLPPVKRGQSSVCHTALFLFAHELHPQETVFHTNDFEGCHLYRVHGPLKRLHGDYFIQTIRGYLSAFTQPACPRVSPVKRASQAILLLVSFVFTYWVDFTFSFSGGVTWINDSLLVWLQVIVANSYAAISPLMLIYADNQIFKTLQMLWFKYLSPPKLMLKFNRQCGSTKK.

Residues 1 to 3 are Extracellular-facing; that stretch reads MLK. Residues 4 to 24 form a helical membrane-spanning segment; the sequence is LVIIENMAEIMLFSLDLLLFS. The Cytoplasmic segment spans residues 25–52; the sequence is TDILCFNFPSKMIKLPGFITIQIFFYPQ. The chain crosses the membrane as a helical span at residues 53–73; sequence ASFGISANTILLLFHIFTFVF. At 74 to 81 the chain is on the extracellular side; the sequence is SHRSKSID. Residues 82 to 102 form a helical membrane-spanning segment; the sequence is MIISHLSLIHILLLFTQAILV. The Cytoplasmic segment spans residues 103–130; that stretch reads SLDFFGSQNTQDDLRYKVIVFLNKVMRG. A helical transmembrane segment spans residues 131–151; sequence LSICTPCLLSVLQAIISPSIF. Residues 152-163 are Extracellular-facing; that stretch reads SLAKLKHPSASH. A helical transmembrane segment spans residues 164–184; the sequence is ILGFFLFSWVLNMFIGVIFCC. The Cytoplasmic portion of the chain corresponds to 185–269; the sequence is TLRLPPVKRG…RVSPVKRASQ (85 aa). A helical membrane pass occupies residues 270–290; that stretch reads AILLLVSFVFTYWVDFTFSFS. At 291-300 the chain is on the extracellular side; the sequence is GGVTWINDSL. Asn297 is a glycosylation site (N-linked (GlcNAc...) asparagine). Residues 301–321 traverse the membrane as a helical segment; the sequence is LVWLQVIVANSYAAISPLMLI. Residues 322–357 are Cytoplasmic-facing; the sequence is YADNQIFKTLQMLWFKYLSPPKLMLKFNRQCGSTKK.

The protein belongs to the G-protein coupled receptor 1 family.

The protein resides in the cell membrane. Its function is as follows. Putative pheromone receptor. This is Vomeronasal type-1 receptor 5 (VN1R5) from Homo sapiens (Human).